A 70-amino-acid polypeptide reads, in one-letter code: Probable U6 snRNA-associated Sm-like protein (70 aa).

One can recognise a Sm domain in the interval 3-70 (DPFCFLKMYL…ILFVGPRLLL (68 aa)).

The protein belongs to the snRNP Sm proteins family.

The protein localises to the nucleus. Its function is as follows. Binds specifically to the 3'-terminal U-tract of U6 snRNA. This chain is Probable U6 snRNA-associated Sm-like protein, found in Encephalitozoon cuniculi (strain GB-M1) (Microsporidian parasite).